A 418-amino-acid polypeptide reads, in one-letter code: Tyrosine--tRNA ligase (418 aa).

Residue Tyr39 participates in L-tyrosine binding. Residues 44–53 (CTAASLHVGH) carry the 'HIGH' region motif. L-tyrosine is bound by residues Tyr176 and Gln180. Positions 236 to 240 (KMGKT) match the 'KMSKS' region motif. Lys239 is an ATP binding site. Positions 350 to 418 (IGVLVAFAEK…KKKHVLLRLA (69 aa)) constitute an S4 RNA-binding domain.

It belongs to the class-I aminoacyl-tRNA synthetase family. TyrS type 1 subfamily. Homodimer.

It localises to the cytoplasm. The catalysed reaction is tRNA(Tyr) + L-tyrosine + ATP = L-tyrosyl-tRNA(Tyr) + AMP + diphosphate + H(+). Its function is as follows. Catalyzes the attachment of tyrosine to tRNA(Tyr) in a two-step reaction: tyrosine is first activated by ATP to form Tyr-AMP and then transferred to the acceptor end of tRNA(Tyr). This Rhodopseudomonas palustris (strain ATCC BAA-98 / CGA009) protein is Tyrosine--tRNA ligase.